The sequence spans 91 residues: Small ribosomal subunit protein bS20 (91 aa).

Belongs to the bacterial ribosomal protein bS20 family.

Binds directly to 16S ribosomal RNA. This is Small ribosomal subunit protein bS20 from Caulobacter sp. (strain K31).